The chain runs to 439 residues: DNA damage-inducible protein 1 (439 aa).

Positions 1–82 (MQITIAIQDT…LALHVRETQR (82 aa)) constitute a Ubiquitin-like domain. The disordered stretch occupies residues 82-101 (RATAVPESQQGRPAAPPQQD). Asp-220 is an active-site residue. The disordered stretch occupies residues 333–398 (QDEPTIEGPG…PAPRAPQARS (66 aa)). Composition is skewed to low complexity over residues 364-375 (GQAGPSTAAQPG) and 383-398 (PASA…QARS). Positions 398-438 (SFPREHIEQLVALGADEQKAIRALEATDGNVEYAASLIFEG) constitute a UBA domain.

Belongs to the DDI1 family. As to quaternary structure, binds ubiquitin and polyubiquitinated proteins.

It localises to the cytoplasm. In terms of biological role, probable aspartic protease. May be involved in the regulation of exocytosis. Acts as a linker between the 19S proteasome and polyubiquitinated proteins via UBA domain interactions with ubiquitin for their subsequent degradation. Required for S-phase checkpoint control. The sequence is that of DNA damage-inducible protein 1 (ddi-1) from Neurospora crassa (strain ATCC 24698 / 74-OR23-1A / CBS 708.71 / DSM 1257 / FGSC 987).